A 270-amino-acid polypeptide reads, in one-letter code: Formamidopyrimidine-DNA glycosylase (270 aa).

Catalysis depends on proline 2, which acts as the Schiff-base intermediate with DNA. Residue glutamate 3 is the Proton donor of the active site. Lysine 58 functions as the Proton donor; for beta-elimination activity in the catalytic mechanism. DNA is bound by residues histidine 90, arginine 109, and arginine 152. Residues 237 to 270 (RVYGREGEPCHCGTVIRRRVDGGRSTFYCPKCQK) form an FPG-type zinc finger. The active-site Proton donor; for delta-elimination activity is arginine 260.

This sequence belongs to the FPG family. Monomer. The cofactor is Zn(2+).

It catalyses the reaction Hydrolysis of DNA containing ring-opened 7-methylguanine residues, releasing 2,6-diamino-4-hydroxy-5-(N-methyl)formamidopyrimidine.. It carries out the reaction 2'-deoxyribonucleotide-(2'-deoxyribose 5'-phosphate)-2'-deoxyribonucleotide-DNA = a 3'-end 2'-deoxyribonucleotide-(2,3-dehydro-2,3-deoxyribose 5'-phosphate)-DNA + a 5'-end 5'-phospho-2'-deoxyribonucleoside-DNA + H(+). Functionally, involved in base excision repair of DNA damaged by oxidation or by mutagenic agents. Acts as a DNA glycosylase that recognizes and removes damaged bases. Has a preference for oxidized purines, such as 7,8-dihydro-8-oxoguanine (8-oxoG). Has AP (apurinic/apyrimidinic) lyase activity and introduces nicks in the DNA strand. Cleaves the DNA backbone by beta-delta elimination to generate a single-strand break at the site of the removed base with both 3'- and 5'-phosphates. This Rhizorhabdus wittichii (strain DSM 6014 / CCUG 31198 / JCM 15750 / NBRC 105917 / EY 4224 / RW1) (Sphingomonas wittichii) protein is Formamidopyrimidine-DNA glycosylase.